Consider the following 146-residue polypeptide: Coactosin (146 aa).

The region spanning 1–132 (MADVSSTELK…NEEELMTKVR (132 aa)) is the ADF-H domain.

The protein belongs to the actin-binding proteins ADF family. Coactosin subfamily. Post-translationally, the N-terminus is blocked.

Its subcellular location is the cytoplasm. It is found in the cytoskeleton. Its function is as follows. Binds to F-actin in a calcium independent manner. Binds to the filaments along their length. The protein is Coactosin (coaA) of Dictyostelium discoideum (Social amoeba).